A 735-amino-acid chain; its full sequence is Disintegrin and metalloproteinase domain-containing protein 2 (735 aa).

The signal sequence occupies residues 1–18; sequence MWLILLLLSGLSELGGLS. Positions 19–180 are excised as a propeptide; it reads QSQTEGTREK…YKIRSIKPQR (162 aa). Over 19-686 the chain is Extracellular; the sequence is QSQTEGTREK…ASAYRSKSPR (668 aa). Residues asparagine 128, asparagine 226, and asparagine 279 are each glycosylated (N-linked (GlcNAc...) asparagine). One can recognise a Peptidase M12B domain in the interval 184 to 381; that stretch reads HYLEIHIVVE…QSSHCLQNQP (198 aa). Intrachain disulfides connect cysteine 293/cysteine 376, cysteine 335/cysteine 360, cysteine 337/cysteine 342, and cysteine 449/cysteine 469. N-linked (GlcNAc...) asparagine glycosylation is found at asparagine 359, asparagine 463, asparagine 489, asparagine 569, and asparagine 585. Positions 389–476 constitute a Disintegrin domain; sequence MAVCGNGEVE…EVCEDFFVQN (88 aa). The region spanning 615–648 is the EGF-like domain; it reads LGYDCNLEKCNHHGVCNNKKNCHCDPTYLPPDCK. Intrachain disulfides connect cysteine 619/cysteine 630, cysteine 624/cysteine 636, and cysteine 638/cysteine 647. The chain crosses the membrane as a helical span at residues 687-707; it reads WPFFLIIPFYVVILVLIGMLV. Over 708-735 the chain is Cytoplasmic; that stretch reads KVYSQRMKWRMDDFSSEEQFESESESKD. Serine 729 is subject to Phosphoserine.

As to quaternary structure, heterodimer with ADAM1/fertilin subunit alpha. In terms of processing, the signal and the metalloprotease domain are cleaved during the epididymal maturation of the spermatozoa. As to expression, expressed in the testis and testicular sperm (at protein level).

It is found in the membrane. Sperm surface membrane protein that may be involved in sperm-egg plasma membrane adhesion and fusion during fertilization. Could have a direct role in sperm-zona binding or migration of sperm from the uterus into the oviduct. Interactions with egg membrane could be mediated via binding between its disintegrin-like domain to one or more integrins receptors on the egg. This is a non catalytic metalloprotease-like protein. The protein is Disintegrin and metalloproteinase domain-containing protein 2 of Mus musculus (Mouse).